Reading from the N-terminus, the 309-residue chain is Mitochondrial brown fat uncoupling protein 1 (309 aa).

The Mitochondrial intermembrane segment spans residues 2-10 (VGHTESDVP). Residues 11-32 (PTMAVKIFSAGVAACVADIITF) form a helical membrane-spanning segment. Solcar repeat units lie at residues 11–106 (PTMA…VQEF), 113–203 (ASLG…MKEA), and 212–297 (DDVP…LKQE). Residues 33–77 (PLDTAKVRLQVGSAIQGECLISSAIRYKGVLGTIITLAKTEGPVK) are Mitochondrial matrix-facing. Fatty acid 16:0 is bound at residue Lys-60. The chain crosses the membrane as a helical span at residues 78–100 (LYSGLPAGLQRQISFASLRIGLY). At 101-118 (DTVQEFFTTGKEASLGSK) the chain is on the mitochondrial intermembrane side. A helical transmembrane segment spans residues 119–135 (ISAGLMTGGVAVFIGQP). The Mitochondrial matrix portion of the chain corresponds to 136-180 (TEVVKVRLQAQSHLHGPKPRYTGTYNAYRIIATTEGLTGLWKGTT). A helical membrane pass occupies residues 181–197 (PNLTRNVIINCTELVTY). At 198 to 214 (DLMKEALVKNKLLADDV) the chain is on the mitochondrial intermembrane side. The helical transmembrane segment at 215 to 234 (PCHFVSAVVAGFCTTVLSSP) threads the bilayer. Residues 235 to 268 (VDVVKTRFVNSSPGQYTSVPNCAMMMLTREGPSA) are Mitochondrial matrix-facing. A Cysteine sulfenic acid (-SOH) modification is found at Cys-256. The helical transmembrane segment at 269–291 (FFKGFVPSFLRLGSWNIIMFVCF) threads the bilayer. Lys-271 contributes to the fatty acid 16:0 binding site. At 292–309 (EQLKQELMKSRHTMDCAT) the chain is on the mitochondrial intermembrane side.

It belongs to the mitochondrial carrier (TC 2.A.29) family. As to quaternary structure, most probably functions as a monomer. Binds one purine nucleotide per monomer. However, has also been suggested to function as a homodimer or a homotetramer. Tightly associates with cardiolipin in the mitochondrion inner membrane; may stabilize and regulate its activity. May undergo sulfenylation upon cold exposure. May increase the sensitivity of UCP1 thermogenic function to the activation by noradrenaline probably through structural effects. In terms of processing, may undergo ubiquitin-mediated proteasomal degradation.

The protein resides in the mitochondrion inner membrane. It carries out the reaction H(+)(in) = H(+)(out). With respect to regulation, has no constitutive proton transporter activity and has to be activated by long-chain fatty acids/LCFAs. Inhibited by purine nucleotides. Both purine nucleotides and LCFAs bind the cytosolic side of the transporter and directly compete to activate or inhibit it. Activated by noradrenaline and reactive oxygen species. Despite lacking canonical translational encoding for selenocysteine, a small pool of the protein has been observed to selectively incorporate selenocysteine at 'Cys-256'. Selenocysteine-modified protein is highly sensitive to redox modification and may constitute a pool of protein highly sensitive to activation by elevated levels of reactive oxygen species (ROS). Functionally, mitochondrial protein responsible for thermogenic respiration, a specialized capacity of brown adipose tissue and beige fat that participates in non-shivering adaptive thermogenesis to temperature and diet variations and more generally to the regulation of energy balance. Functions as a long-chain fatty acid/LCFA and proton symporter, simultaneously transporting one LCFA and one proton through the inner mitochondrial membrane. However, LCFAs remaining associated with the transporter via their hydrophobic tails, it results in an apparent transport of protons activated by LCFAs. Thereby, dissipates the mitochondrial proton gradient and converts the energy of substrate oxydation into heat instead of ATP. Regulates the production of reactive oxygen species/ROS by mitochondria. The sequence is that of Mitochondrial brown fat uncoupling protein 1 from Bos taurus (Bovine).